A 216-amino-acid chain; its full sequence is MFKPSAHRRLPREDDIIQEDDEDGPLWPSALRRLSNEEERLKIADGDERKLFSAYPRGSMENRDYKVWDIYFTLGGDSLYAGRILKAVMKFPSSYPLRPPTLKFVSKMFHPNIYEDGKMCISILEEDKQQDSSVFGDPKDKWTPVQNIRTIVMSIVVILNSPNISSPANVDASVMYRDNPEEYIKEVIRIAREEDEKLRRTDPQAREVALQMKAEN.

The span at 1–10 (MFKPSAHRRL) shows a compositional bias: basic residues. The tract at residues 1 to 29 (MFKPSAHRRLPREDDIIQEDDEDGPLWPS) is disordered. A UBC core domain is found at 29-196 (SALRRLSNEE…VIRIAREEDE (168 aa)). Catalysis depends on Cys120, which acts as the Glycyl thioester intermediate.

The protein belongs to the ubiquitin-conjugating enzyme family.

It carries out the reaction S-ubiquitinyl-[E1 ubiquitin-activating enzyme]-L-cysteine + [E2 ubiquitin-conjugating enzyme]-L-cysteine = [E1 ubiquitin-activating enzyme]-L-cysteine + S-ubiquitinyl-[E2 ubiquitin-conjugating enzyme]-L-cysteine.. The protein operates within protein modification; protein ubiquitination. Its function is as follows. Catalyzes the covalent attachment of ubiquitin to other proteins so as to signal them for selective protein degradation. Involved in the formation of multiubiquitin chains. The polypeptide is Probable ubiquitin-conjugating enzyme E2 ECU01_1010 (Encephalitozoon cuniculi (strain GB-M1) (Microsporidian parasite)).